The chain runs to 278 residues: NAD-dependent protein deacylase (278 aa).

The Deacetylase sirtuin-type domain occupies Arg22–Thr270. Residue Gly46–Trp65 coordinates NAD(+). 2 residues coordinate substrate: Tyr90 and Arg93. Position 127 to 130 (Gln127 to Asp130) interacts with NAD(+). The active-site Proton acceptor is His145. Cys153 and Cys172 together coordinate Zn(2+). Residues Gly212–Ser214, Asn238–Glu240, and Ala256 contribute to the NAD(+) site.

The protein belongs to the sirtuin family. Class III subfamily. Zn(2+) is required as a cofactor.

It localises to the cytoplasm. The enzyme catalyses N(6)-acetyl-L-lysyl-[protein] + NAD(+) + H2O = 2''-O-acetyl-ADP-D-ribose + nicotinamide + L-lysyl-[protein]. It catalyses the reaction N(6)-succinyl-L-lysyl-[protein] + NAD(+) + H2O = 2''-O-succinyl-ADP-D-ribose + nicotinamide + L-lysyl-[protein]. It carries out the reaction N(6)-(2-hydroxyisobutanoyl)-L-lysyl-[protein] + NAD(+) + H2O = 2''-O-(2-hydroxyisobutanoyl)-ADP-D-ribose + nicotinamide + L-lysyl-[protein]. Functionally, NAD-dependent lysine deacetylase that specifically removes acetyl groups on target proteins. Also acts as a protein-lysine deacylase by mediating protein desuccinylation and de-2-hydroxyisobutyrylation. Modulates the activities of several proteins which are inactive in their acylated form. The polypeptide is NAD-dependent protein deacylase (Yersinia pestis).